The chain runs to 379 residues: Wnt inhibitory factor 1 (379 aa).

The signal sequence occupies residues 1 to 28; it reads MARRRAFPAFALRLWSILPCLLLLRADA. The WIF domain occupies 38-177; sequence LWIDAHQARV…PQNAIFFKTC (140 aa). An N-linked (GlcNAc...) asparagine glycan is attached at N88. Intrachain disulfides connect C140/C177, C182/C192, C186/C198, C200/C209, C214/C224, C218/C230, and C232/C241. EGF-like domains follow at residues 178-210, 211-242, 243-271, 274-306, and 307-338; these read QQAECPGGCRNGGFCNERRVCECPDGFYGPHCE, KALCIPRCMNGGLCVTPGFCICPPGFYGVNCD, KANCSTTCFNGGTCFYPGKCICPPGLEGE, ELSKCPQPCRNGGKCIGKSKCKCPKGYQGDLCS, and KPVCEPGCGAHGTCHEPNKCQCREGWHGRHCN. Residue N245 is glycosylated (N-linked (GlcNAc...) asparagine). Intrachain disulfides connect C246/C256, C250/C262, C278/C288, C282/C294, C296/C305, C310/C320, C314/C326, and C328/C337. Residues 348 to 379 are disordered; sequence APRPAGAGLERHTPSLKKAEDRRDPPESNYIW. Positions 356 to 373 are enriched in basic and acidic residues; that stretch reads LERHTPSLKKAEDRRDPP.

Interacts with MYOC. In terms of tissue distribution, expression highest in heart and lung. Lower in brain and eye.

It is found in the secreted. Functionally, binds to WNT proteins and inhibits their activities. May be involved in mesoderm segmentation. This chain is Wnt inhibitory factor 1 (Wif1), found in Mus musculus (Mouse).